Reading from the N-terminus, the 183-residue chain is Large ribosomal subunit protein uL5 (183 aa).

Belongs to the universal ribosomal protein uL5 family. In terms of assembly, part of the 50S ribosomal subunit; part of the 5S rRNA/L5/L18/L25 subcomplex. Contacts the 5S rRNA and the P site tRNA. Forms a bridge to the 30S subunit in the 70S ribosome.

This is one of the proteins that bind and probably mediate the attachment of the 5S RNA into the large ribosomal subunit, where it forms part of the central protuberance. In the 70S ribosome it contacts protein S13 of the 30S subunit (bridge B1b), connecting the 2 subunits; this bridge is implicated in subunit movement. Contacts the P site tRNA; the 5S rRNA and some of its associated proteins might help stabilize positioning of ribosome-bound tRNAs. The chain is Large ribosomal subunit protein uL5 from Christiangramia forsetii (strain DSM 17595 / CGMCC 1.15422 / KT0803) (Gramella forsetii).